A 411-amino-acid polypeptide reads, in one-letter code: Prophage integrase IntR (411 aa).

One can recognise a Core-binding (CB) domain in the interval 81 to 176; the sequence is KTFGELCDIW…LLCSLLRFAY (96 aa). One can recognise a Tyr recombinase domain in the interval 197–404; it reads IKPDPLSKTE…IDDMNDEQIA (208 aa). Catalysis depends on residues arginine 231, lysine 266, arginine 358, and histidine 381. Tyrosine 391 acts as the O-(3'-phospho-DNA)-tyrosine intermediate in catalysis.

It belongs to the 'phage' integrase family.

In terms of biological role, integrase is necessary for integration of the phage into the host genome by site-specific recombination. In conjunction with excisionase, integrase is also necessary for excision of the prophage from the host genome. The protein is Prophage integrase IntR (intR) of Escherichia coli (strain K12).